The chain runs to 1296 residues: Probable serine/threonine protein kinase IREH1 (1296 aa).

Disordered stretches follow at residues 1 to 274 (MVFK…SESP), 457 to 480 (SGAGRSYSAAKVPSTKKAYSQEQH), and 524 to 553 (SPALKTVKEAPASEEQNDSKVEPPNIVGSR). Positions 10–32 (SSKKSGSSSPDSSNSPRSVGSNS) are enriched in low complexity. Ser32 bears the Phosphoserine mark. Basic and acidic residues-rich tracts occupy residues 68 to 77 (DGLKKKDGSS), 101 to 112 (EVKKPPPPEVKE), and 178 to 208 (RKKEAGSSKLGLEENMDRTRPSDNKSDRDSL). The span at 214–249 (PPRSLSPTLPPSGSRLQNVASSSGTGRSEMSSGRSG) shows a compositional bias: low complexity. Residues 602–621 (CRICEEEVPTTHVEDHSRVC) form a C2H2-type; atypical zinc finger. The disordered stretch occupies residues 724 to 750 (FGPKSDQGMTTSSASSMTPRSPIPTPR). The span at 730–740 (QGMTTSSASSM) shows a compositional bias: polar residues. One can recognise a Protein kinase domain in the interval 882-1171 (FEIIKPISRG…AAEVKQHIFF (290 aa)). ATP is bound by residues 888–896 (ISRGAFGRV) and Lys911. Residue Asp1005 is the Proton acceptor of the active site. Position 1070 is a phosphoserine (Ser1070). The 106-residue stretch at 1172–1277 (KDINWDTLAR…KNLSQLASIN (106 aa)) folds into the AGC-kinase C-terminal domain. The segment at 1214 to 1245 (PSGEVPDYSDADSMTNSSGCSSNHHEEGEAEE) is disordered. Polar residues predominate over residues 1225-1235 (DSMTNSSGCSS). Positions 1236–1245 (NHHEEGEAEE) are enriched in basic and acidic residues.

Belongs to the protein kinase superfamily. AGC Ser/Thr protein kinase family.

It catalyses the reaction L-seryl-[protein] + ATP = O-phospho-L-seryl-[protein] + ADP + H(+). It carries out the reaction L-threonyl-[protein] + ATP = O-phospho-L-threonyl-[protein] + ADP + H(+). Functionally, may be involved in root hair elongation. This Arabidopsis thaliana (Mouse-ear cress) protein is Probable serine/threonine protein kinase IREH1.